Consider the following 83-residue polypeptide: Small ribosomal subunit protein uS17 (83 aa).

This sequence belongs to the universal ribosomal protein uS17 family. As to quaternary structure, part of the 30S ribosomal subunit.

One of the primary rRNA binding proteins, it binds specifically to the 5'-end of 16S ribosomal RNA. The polypeptide is Small ribosomal subunit protein uS17 (Pseudoalteromonas atlantica (strain T6c / ATCC BAA-1087)).